The sequence spans 1029 residues: Tyrosine-protein kinase-like otk (1029 aa).

The first 18 residues, 1–18 (MISIYGLVMALMMASVLA), serve as a signal peptide directing secretion. Residues 19–577 (SSSRFQRVPQ…GGDGFLVTRA (559 aa)) lie on the Extracellular side of the membrane. 5 consecutive Ig-like C2-type domains span residues 21–110 (SRFQ…AKLS), 109–195 (LSVI…RVMS), 247–361 (PEDL…APIS), 364–459 (PGIL…VAIN), and 464–554 (PKFS…VQLV). N-linked (GlcNAc...) asparagine glycosylation is present at Asn-35. 4 disulfide bridges follow: Cys-42–Cys-91, Cys-133–Cys-184, Cys-272–Cys-350, and Cys-395–Cys-443. N-linked (GlcNAc...) asparagine glycosylation is found at Asn-332, Asn-413, Asn-425, Asn-440, Asn-453, Asn-508, and Asn-520. Cys-486 and Cys-538 are joined by a disulfide. A helical transmembrane segment spans residues 578-598 (VLITMTVALAYIVLVVGLMLW). The Cytoplasmic portion of the chain corresponds to 599 to 1029 (CRYRRQARKA…LSKAMQSAEK (431 aa)). Disordered stretches follow at residues 613-675 (LSTK…KKSA) and 714-756 (SPSD…KTSM). The segment covering 651 to 669 (KSSGDAQKSDDTACSQQSR) has biased composition (polar residues). The residue at position 674 (Ser-674) is a Phosphoserine. The region spanning 688-1024 (LSELIQIGRG…QLGAALSKAM (337 aa)) is the Protein kinase; inactive domain. Positions 716–727 (SDKDADTEKQHS) are enriched in basic and acidic residues.

Belongs to the protein kinase superfamily. Tyr protein kinase family. Insulin receptor subfamily. Interacts with plexA; component of a receptor complex that mediates the repulsive signaling in response to Semaphorin ligands.

Its subcellular location is the cell membrane. Acts as a calcium-dependent, homophilic cell adhesion molecule that regulates neural recognition during the development of the nervous system. Component of the repulsive Plexin signaling response to regulate motor axon guidance at the embryonic stage. Also component of a receptor complex that is required in the adult visual system to innervate the lamina layer; specific targeting of R1-R6 axons. This is Tyrosine-protein kinase-like otk from Drosophila simulans (Fruit fly).